The primary structure comprises 103 residues: Large ribosomal subunit protein uL24 (103 aa).

Belongs to the universal ribosomal protein uL24 family. Part of the 50S ribosomal subunit.

One of two assembly initiator proteins, it binds directly to the 5'-end of the 23S rRNA, where it nucleates assembly of the 50S subunit. Its function is as follows. One of the proteins that surrounds the polypeptide exit tunnel on the outside of the subunit. In Haemophilus influenzae (strain PittEE), this protein is Large ribosomal subunit protein uL24.